The following is a 322-amino-acid chain: Ferric-anguibactin-binding protein FatB (322 aa).

A signal peptide spans 1–22 (MFKSTLNIAVAIVCSSLVTLTG). A lipid anchor (N-palmitoyl cysteine) is attached at Cys-23. Residue Cys-23 is the site of S-diacylglycerol cysteine attachment. In terms of domain architecture, Fe/B12 periplasmic-binding spans 57–322 (RVAALDMNEV…IDDIIKGYQS (266 aa)).

It belongs to the bacterial solute-binding protein 8 family. Part of an iron transport system composed of the outer membrane receptor FatA, the periplasmic binding protein FatB and the inner membrane proteins FatC and FatD.

It localises to the cell inner membrane. Involved in the uptake of iron in complex with the siderophore anguibactin. Binds ferric-anguibactin in the periplasm and mediates its transport into the cytoplasm. This is Ferric-anguibactin-binding protein FatB from Vibrio anguillarum (strain ATCC 68554 / 775) (Listonella anguillarum).